The primary structure comprises 260 residues: Proteasome subunit alpha (260 aa).

Residues 231–260 are disordered; it reads LLPEDFSPGQTEGGGDPAPESGDSKDAKDN.

It belongs to the peptidase T1A family. As to quaternary structure, the 20S proteasome core is composed of 14 alpha and 14 beta subunits that assemble into four stacked heptameric rings, resulting in a barrel-shaped structure. The two inner rings, each composed of seven catalytic beta subunits, are sandwiched by two outer rings, each composed of seven alpha subunits. The catalytic chamber with the active sites is on the inside of the barrel. Has a gated structure, the ends of the cylinder being occluded by the N-termini of the alpha-subunits. Is capped by the proteasome-associated ATPase, ARC.

The protein resides in the cytoplasm. It participates in protein degradation; proteasomal Pup-dependent pathway. With respect to regulation, the formation of the proteasomal ATPase ARC-20S proteasome complex, likely via the docking of the C-termini of ARC into the intersubunit pockets in the alpha-rings, may trigger opening of the gate for substrate entry. Interconversion between the open-gate and close-gate conformations leads to a dynamic regulation of the 20S proteasome proteolysis activity. In terms of biological role, component of the proteasome core, a large protease complex with broad specificity involved in protein degradation. The sequence is that of Proteasome subunit alpha from Mycobacteroides abscessus (strain ATCC 19977 / DSM 44196 / CCUG 20993 / CIP 104536 / JCM 13569 / NCTC 13031 / TMC 1543 / L948) (Mycobacterium abscessus).